The sequence spans 137 residues: Large ribosomal subunit protein uL16 (137 aa).

The protein belongs to the universal ribosomal protein uL16 family. As to quaternary structure, part of the 50S ribosomal subunit.

In terms of biological role, binds 23S rRNA and is also seen to make contacts with the A and possibly P site tRNAs. This chain is Large ribosomal subunit protein uL16, found in Wolbachia sp. subsp. Brugia malayi (strain TRS).